The primary structure comprises 475 residues: Lipoprotein lipase (475 aa).

Residues 1 to 27 (MESKALLVLTLAVWLQSLTASRGGVAA) form the signal peptide. Residues 32–53 (RDFIDIESKFALRTPEDTAEDT) form an interaction with GPIHBP1 region. Residues Cys54 and Cys67 are joined by a disulfide bond. A glycan (N-linked (GlcNAc...) asparagine) is linked at Asn70. Tyr121 carries the post-translational modification 3'-nitrotyrosine. Ser159 functions as the Nucleophile in the catalytic mechanism. Catalysis depends on Asp183, which acts as the Charge relay system. 3'-nitrotyrosine is present on Tyr191. Ca(2+) is bound by residues Ala194, Arg197, Ser199, and Asp202. A disulfide bond links Cys243 and Cys266. The tract at residues 243–266 (CNIGEAIRVIAERGLGDVDQLVKC) is essential for determining substrate specificity. His268 (charge relay system) is an active-site residue. 2 disulfides stabilise this stretch: Cys291–Cys310 and Cys302–Cys305. Positions 341-464 (FHYQVKIHFS…KGKAPAVFVK (124 aa)) constitute a PLAT domain. Position 343 is a 3'-nitrotyrosine (Tyr343). N-linked (GlcNAc...) asparagine glycosylation is present at Asn386. An important for interaction with lipoprotein particles region spans residues 417 to 421 (WSDWW). The important for heparin binding stretch occupies residues 430–434 (KIRVK). The segment at 443–467 (IFCSREKVSHLQKGKAPAVFVKCHD) is interaction with GPIHBP1. Cysteines 445 and 465 form a disulfide.

It belongs to the AB hydrolase superfamily. Lipase family. Homodimer. Interacts with GPIHBP1 with 1:1 stoichiometry. Interacts with APOC2; the interaction activates LPL activity in the presence of lipids. Interaction with heparan sulfate proteoglycans is required to protect LPL against loss of activity. Associates with lipoprotein particles in blood plasma. Interacts with LMF1 and SEL1L; interaction with SEL1L is required to prevent aggregation of newly synthesized LPL in the endoplasmic reticulum (ER), and for normal export of LPL from the ER to the extracellular space. Interacts with SORL1; SORL1 acts as a sorting receptor, promoting LPL localization to endosomes and later to lysosomes, leading to degradation of newly synthesized LPL. Tyrosine nitration after lipopolysaccharide (LPS) challenge down-regulates the lipase activity. In terms of tissue distribution, detected in blood plasma. Detected in milk (at protein level).

Its subcellular location is the cell membrane. It is found in the secreted. It localises to the extracellular space. The protein localises to the extracellular matrix. It carries out the reaction a triacylglycerol + H2O = a diacylglycerol + a fatty acid + H(+). It catalyses the reaction a 1,2-diacyl-sn-glycero-3-phosphocholine + H2O = a 2-acyl-sn-glycero-3-phosphocholine + a fatty acid + H(+). The enzyme catalyses 1,2,3-tri-(9Z-octadecenoyl)-glycerol + H2O = di-(9Z)-octadecenoylglycerol + (9Z)-octadecenoate + H(+). The catalysed reaction is 1,2-di-(9Z-octadecenoyl)-sn-glycero-3-phosphocholine + H2O = (9Z-octadecenoyl)-sn-glycero-3-phosphocholine + (9Z)-octadecenoate + H(+). It carries out the reaction 1,2,3-tributanoylglycerol + H2O = dibutanoylglycerol + butanoate + H(+). It catalyses the reaction 1,2-dihexadecanoyl-sn-glycero-3-phosphocholine + H2O = hexadecanoyl-sn-glycero-3-phosphocholine + hexadecanoate + H(+). Its activity is regulated as follows. The apolipoprotein APOC2 acts as a coactivator of LPL activity. Ca(2+) binding promotes protein stability and formation of the active homodimer. Interaction with GPIHBP1 protects LPL against inactivation by ANGPTL4. Inhibited by NaCl. Its function is as follows. Key enzyme in triglyceride metabolism. Catalyzes the hydrolysis of triglycerides from circulating chylomicrons and very low density lipoproteins (VLDL), and thereby plays an important role in lipid clearance from the blood stream, lipid utilization and storage. Although it has both phospholipase and triglyceride lipase activities it is primarily a triglyceride lipase with low but detectable phospholipase activity. Mediates margination of triglyceride-rich lipoprotein particles in capillaries. Recruited to its site of action on the luminal surface of vascular endothelium by binding to GPIHBP1 and cell surface heparan sulfate proteoglycans. This is Lipoprotein lipase (LPL) from Homo sapiens (Human).